We begin with the raw amino-acid sequence, 245 residues long: 1-(5-phosphoribosyl)-5-[(5-phosphoribosylamino)methylideneamino] imidazole-4-carboxamide isomerase (245 aa).

D8 serves as the catalytic Proton acceptor. D130 functions as the Proton donor in the catalytic mechanism.

The protein belongs to the HisA/HisF family.

It is found in the cytoplasm. The catalysed reaction is 1-(5-phospho-beta-D-ribosyl)-5-[(5-phospho-beta-D-ribosylamino)methylideneamino]imidazole-4-carboxamide = 5-[(5-phospho-1-deoxy-D-ribulos-1-ylimino)methylamino]-1-(5-phospho-beta-D-ribosyl)imidazole-4-carboxamide. It functions in the pathway amino-acid biosynthesis; L-histidine biosynthesis; L-histidine from 5-phospho-alpha-D-ribose 1-diphosphate: step 4/9. The polypeptide is 1-(5-phosphoribosyl)-5-[(5-phosphoribosylamino)methylideneamino] imidazole-4-carboxamide isomerase (Pseudomonas savastanoi pv. phaseolicola (strain 1448A / Race 6) (Pseudomonas syringae pv. phaseolicola (strain 1448A / Race 6))).